Here is a 200-residue protein sequence, read N- to C-terminus: Alpha-amylase/subtilisin inhibitor (200 aa).

The first 22 residues, 1–22, serve as a signal peptide directing secretion; sequence MVSLRLPLILLSLLAISFSCSA. Intrachain disulfides connect Cys-63–Cys-112 and Cys-162–Cys-166.

This sequence belongs to the protease inhibitor I3 (leguminous Kunitz-type inhibitor) family.

Functionally, this protein inhibits independently subtilisin and T.castaneum alpha-amylase but not barley alpha-amylase. This chain is Alpha-amylase/subtilisin inhibitor (RASI), found in Oryza sativa subsp. japonica (Rice).